A 40-amino-acid polypeptide reads, in one-letter code: Large ribosomal subunit protein bL36B (40 aa).

Belongs to the bacterial ribosomal protein bL36 family.

This is Large ribosomal subunit protein bL36B from Clavibacter michiganensis subsp. michiganensis (strain NCPPB 382).